The sequence spans 706 residues: MGDERPHYYGKHGTPQKYDPTFKGPIYNRGCTDIICCVFLLLAIVGYVAVGIIAWTHGDPRKVIYPTDSRGEFCGQKGTKNENKPYLFYFNIVKCASPLVLLEFQCPTPQICVEKCPDRYLTYLNARSSRDFEYYKQFCVPGFKNNKGVAEVLQDGDCPAVLIPSKPLARRCFPAIHAYKGVLMVGNETTYEDGHGSRKNITDLVEGAKKANGVLEARQLAMRIFEDYTVSWYWIIIGLVIAMAMSLLFIILLRFLAGIMVWVMIIMVILVLGYGIFHCYMEYSRLRGEAGSDVSLVDLGFQTDFRVYLHLRQTWLAFMIILSILEVIIILLLIFLRKRILIAIALIKEASRAVGYVMCSLLYPLVTFFLLCLCIAYWASTAVFLSTSNEAVYKIFDDSPCPFTAKTCNPETFPSSNESRQCPNARCQFAFYGGESGYHRALLGLQIFNAFMFFWLANFVLALGQVTLAGAFASYYWALRKPDDLPAFPLFSAFGRALRYHTGSLAFGALILAIVQIIRVILEYLDQRLKAAENKFAKCLMTCLKCCFWCLEKFIKFLNRNAYIMIAIYGTNFCTSARNAFFLLMRNIIRVAVLDKVTDFLFLLGKLLIVGSVGILAFFFFTHRIRIVQDTAPPLNYYWVPILTVIVGSYLIAHGFFSVYGMCVDTLFLCFLEDLERNDGSAERPYFMSSTLKKLLNKTNKKAAES.

At 1–33 the chain is on the cytoplasmic side; sequence MGDERPHYYGKHGTPQKYDPTFKGPIYNRGCTD. Residue Thr14 is modified to Phosphothreonine. A helical transmembrane segment spans residues 34 to 54; that stretch reads IICCVFLLLAIVGYVAVGIIA. The Extracellular portion of the chain corresponds to 55 to 232; it reads WTHGDPRKVI…RIFEDYTVSW (178 aa). 2 N-linked (GlcNAc...) asparagine glycosylation sites follow: Asn187 and Asn200. A helical membrane pass occupies residues 233–253; it reads YWIIIGLVIAMAMSLLFIILL. Over 254-256 the chain is Cytoplasmic; the sequence is RFL. A helical transmembrane segment spans residues 257–277; the sequence is AGIMVWVMIIMVILVLGYGIF. Residues 278–315 lie on the Extracellular side of the membrane; it reads HCYMEYSRLRGEAGSDVSLVDLGFQTDFRVYLHLRQTW. Residues 316–336 form a helical membrane-spanning segment; that stretch reads LAFMIILSILEVIIILLLIFL. The Cytoplasmic portion of the chain corresponds to 337-364; it reads RKRILIAIALIKEASRAVGYVMCSLLYP. A helical membrane pass occupies residues 365 to 385; it reads LVTFFLLCLCIAYWASTAVFL. The Extracellular segment spans residues 386–457; the sequence is STSNEAVYKI…FNAFMFFWLA (72 aa). Residue Asn417 is glycosylated (N-linked (GlcNAc...) asparagine). The helical transmembrane segment at 458 to 480 threads the bilayer; sequence NFVLALGQVTLAGAFASYYWALR. The Cytoplasmic portion of the chain corresponds to 481-504; it reads KPDDLPAFPLFSAFGRALRYHTGS. Residues 505–525 form a helical membrane-spanning segment; it reads LAFGALILAIVQIIRVILEYL. Residues 526–563 lie on the Extracellular side of the membrane; the sequence is DQRLKAAENKFAKCLMTCLKCCFWCLEKFIKFLNRNAY. Residues 564 to 584 traverse the membrane as a helical segment; sequence IMIAIYGTNFCTSARNAFFLL. Over 585–599 the chain is Cytoplasmic; that stretch reads MRNIIRVAVLDKVTD. The helical transmembrane segment at 600 to 620 threads the bilayer; the sequence is FLFLLGKLLIVGSVGILAFFF. At 621–638 the chain is on the extracellular side; that stretch reads FTHRIRIVQDTAPPLNYY. A helical membrane pass occupies residues 639–659; that stretch reads WVPILTVIVGSYLIAHGFFSV. Residues 660-706 lie on the Cytoplasmic side of the membrane; sequence YGMCVDTLFLCFLEDLERNDGSAERPYFMSSTLKKLLNKTNKKAAES.

It belongs to the CTL (choline transporter-like) family. As to quaternary structure, interacts with COCH. Present in supporting cells of the inner ear (at protein level). In terms of tissue distribution, expressed in inner ear vestibular tissue.

It localises to the cell membrane. The protein resides in the mitochondrion outer membrane. It catalyses the reaction choline(out) + n H(+)(in) = choline(in) + n H(+)(out). It carries out the reaction ethanolamine(out) + n H(+)(in) = ethanolamine(in) + n H(+)(out). Choline/H+ antiporter, mainly in mitochodria. Also acts as a low-affinity ethanolamine/H+ antiporter, regulating the supply of extracellular ethanolamine (Etn) for the CDP-Etn pathway, redistribute intracellular Etn and balance the CDP-Cho and CDP-Etn arms of the Kennedy pathway. In terms of biological role, does not exhibit choline transporter activity. This Homo sapiens (Human) protein is Choline transporter-like protein 2.